Reading from the N-terminus, the 295-residue chain is Chromatin modification-related protein YNG2 (295 aa).

The segment at 151-208 (NGTAGSGSSSGRKRPASSSSANGKGQKRKQQKKERSRSHQRAGTVSRDVSPNAGIGRD) is disordered. Residues 156-171 (SGSSSGRKRPASSSSA) show a composition bias toward low complexity. Residues 175-190 (GQKRKQQKKERSRSHQ) are compositionally biased toward basic residues. Residues 233–282 (QLYCFCQRVSYGEMVACDGPNCKYEWFHYSCVNLTEPPKGQWYCPECRLE) form a PHD-type zinc finger. Zn(2+) contacts are provided by Cys-236, Cys-238, Cys-249, Cys-254, His-260, Cys-263, Cys-276, and Cys-279.

The protein belongs to the ING family. Interacts with H3K4me3 and to a lesser extent with H3K4me2. Component of the NuA4 histone acetyltransferase complex.

Its subcellular location is the nucleus. Component of the NuA4 histone acetyltransferase complex which is involved in transcriptional activation of selected genes principally by acetylation of nucleosomal histone H4 and H2A. The NuA4 complex is also involved in DNA repair. Involved in cell cycle progression and meiosis. The polypeptide is Chromatin modification-related protein YNG2 (YNG2) (Kluyveromyces lactis (strain ATCC 8585 / CBS 2359 / DSM 70799 / NBRC 1267 / NRRL Y-1140 / WM37) (Yeast)).